Consider the following 88-residue polypeptide: Small ribosomal subunit protein bS16 (88 aa).

It belongs to the bacterial ribosomal protein bS16 family.

This is Small ribosomal subunit protein bS16 from Halothermothrix orenii (strain H 168 / OCM 544 / DSM 9562).